The primary structure comprises 334 residues: Protein translocase subunit SecF (334 aa).

The next 6 membrane-spanning stretches (helical) occupy residues 18 to 38 (VAAG…AVTG), 144 to 164 (GAAM…AIRF), 168 to 190 (FGLA…IKIF), 195 to 217 (SLTV…IIIF), 258 to 278 (ATLA…WVMA), and 279 to 299 (FGVV…LLWI).

The protein belongs to the SecD/SecF family. SecF subfamily. As to quaternary structure, forms a complex with SecD. Part of the essential Sec protein translocation apparatus which comprises SecA, SecYEG and auxiliary proteins SecDF. Other proteins may also be involved.

It localises to the cell inner membrane. Functionally, part of the Sec protein translocase complex. Interacts with the SecYEG preprotein conducting channel. SecDF uses the proton motive force (PMF) to complete protein translocation after the ATP-dependent function of SecA. The chain is Protein translocase subunit SecF from Gemmatimonas aurantiaca (strain DSM 14586 / JCM 11422 / NBRC 100505 / T-27).